A 314-amino-acid polypeptide reads, in one-letter code: Putative peptide transport system permease protein BruAb2_1031 (314 aa).

Transmembrane regions (helical) follow at residues 12-32, 101-121, 135-155, 177-197, 237-257, and 286-306; these read AIPVMLIVAILTFLLMKLLPG, LALLAFAITIPVGIIMGVVAA, LALLGVSVPSFWLAILAVILF, WLRSLILPASILALFQIGYLA, VSVLTVSGYIFSLLIGGSVVI, and MLFLGFLFVAINVLVDILYTI. One can recognise an ABC transmembrane type-1 domain in the interval 95 to 304; sequence LPVTISLALL…AINVLVDILY (210 aa).

It belongs to the binding-protein-dependent transport system permease family. In terms of assembly, the complex is composed of two ATP-binding proteins (BruAb2_1033 and BruAb2_1034), two transmembrane proteins (BruAb2_1031 and BruAb2_1032) and a solute-binding protein (BruAb2_1030).

Its subcellular location is the cell inner membrane. Probably part of an ABC transporter complex that could be involved in peptide import. Probably responsible for the translocation of the substrate across the membrane. The chain is Putative peptide transport system permease protein BruAb2_1031 from Brucella abortus biovar 1 (strain 9-941).